A 369-amino-acid chain; its full sequence is Putative 2-aminoethylphosphonate import ATP-binding protein PhnT (369 aa).

The 232-residue stretch at 19–250 (IVLDSLRVAY…PPNRFAAEFL (232 aa)) folds into the ABC transporter domain. Position 51-58 (51-58 (GPSGSGKT)) interacts with ATP.

This sequence belongs to the ABC transporter superfamily. 2-aminoethylphosphonate importer (TC 3.A.1.11.5) family.

The protein localises to the cell inner membrane. Probably part of the PhnSTUV complex (TC 3.A.1.11.5) involved in 2-aminoethylphosphonate import. Probably responsible for energy coupling to the transport system. This Salmonella paratyphi A (strain ATCC 9150 / SARB42) protein is Putative 2-aminoethylphosphonate import ATP-binding protein PhnT (phnT).